The primary structure comprises 195 residues: Phosphoheptose isomerase (195 aa).

Residues 36–195 (LVDSLKGDGI…IIEKELFGLD (160 aa)) form the SIS domain. 51–53 (NGG) is a substrate binding site. Residues histidine 60 and glutamate 64 each coordinate Zn(2+). Substrate contacts are provided by residues glutamate 64, 95 to 96 (ND), 121 to 123 (TTS), serine 126, and glutamine 173. Zn(2+)-binding residues include glutamine 173 and histidine 181.

The protein belongs to the SIS family. GmhA subfamily. Requires Zn(2+) as cofactor.

The protein resides in the cytoplasm. It catalyses the reaction 2 D-sedoheptulose 7-phosphate = D-glycero-alpha-D-manno-heptose 7-phosphate + D-glycero-beta-D-manno-heptose 7-phosphate. The protein operates within carbohydrate biosynthesis; D-glycero-D-manno-heptose 7-phosphate biosynthesis; D-glycero-alpha-D-manno-heptose 7-phosphate and D-glycero-beta-D-manno-heptose 7-phosphate from sedoheptulose 7-phosphate: step 1/1. Functionally, catalyzes the isomerization of sedoheptulose 7-phosphate in D-glycero-D-manno-heptose 7-phosphate. The chain is Phosphoheptose isomerase from Leptospira biflexa serovar Patoc (strain Patoc 1 / Ames).